The primary structure comprises 693 residues: Protein-glutamine gamma-glutamyltransferase E (693 aa).

At Y111 the chain carries Phosphotyrosine. Position 112 is a phosphothreonine (T112). Ca(2+)-binding residues include A222, N225, N227, and D228. The active site involves C273. The Ca(2+) site is built by D302, D304, N306, S308, and D325. Catalysis depends on residues H331 and D354. Ca(2+)-binding residues include N394, T416, E444, and E449. Residues 455–482 are disordered; the sequence is KAMNKLKPNASFGATSSRGPQGEEKEPS.

This sequence belongs to the transglutaminase superfamily. Transglutaminase family. In terms of assembly, consists of two polypeptide chains, which are synthesized as a precursor form of a single polypeptide. Ca(2+) is required as a cofactor. Activated by proteolytic processing. In vitro activation is commonly achieved by cleavage with dispase, a neutral bacterial protease. Physiological activation may be catalyzed by CTSL and, to a lesser extent, by CTSS.

It localises to the cytoplasm. It carries out the reaction L-glutaminyl-[protein] + L-lysyl-[protein] = [protein]-L-lysyl-N(6)-5-L-glutamyl-[protein] + NH4(+). Catalyzes the calcium-dependent formation of isopeptide cross-links between glutamine and lysine residues in various proteins, as well as the conjugation of polyamines to proteins. Involved in the formation of the cornified envelope (CE), a specialized component consisting of covalent cross-links of proteins beneath the plasma membrane of terminally differentiated keratinocytes. Catalyzes small proline-rich proteins and LOR cross-linking to form small interchain oligomers, which are further cross-linked by TGM1 onto the growing CE scaffold. In hair follicles, involved in cross-linking structural proteins to hardening the inner root sheath. In Rattus norvegicus (Rat), this protein is Protein-glutamine gamma-glutamyltransferase E (Tgm3).